The sequence spans 392 residues: WD repeat-containing protein GTS1 (392 aa).

WD repeat units lie at residues 81-124, 128-167, 171-211, and 323-368; these read GHSD…QVSR, GNDQ…QVAC, SHMD…NDDD, and GHID…TEIN.

As to expression, expressed in germinating seeds, rosettes leaves, flowers and siliques.

Involved in the control of plant growth development. Acts as negative regulator of seed germination, cell division in meristematic regions, plant growth and overall biomass accumulation. May function by regulating ribosome activities and biogenesis in plant cells. The polypeptide is WD repeat-containing protein GTS1 (Arabidopsis thaliana (Mouse-ear cress)).